Reading from the N-terminus, the 340-residue chain is DNA-directed RNA polymerase subunit alpha (340 aa).

An alpha N-terminal domain (alpha-NTD) region spans residues 1-233; sequence MYKNWRDLIR…EQLSIFINFD (233 aa). Positions 246–340 are alpha C-terminal domain (alpha-CTD); that stretch reads DEIDKINENL…RLRGEQNEEE (95 aa).

This sequence belongs to the RNA polymerase alpha chain family. Homodimer. The RNAP catalytic core consists of 2 alpha, 1 beta, 1 beta' and 1 omega subunit. When a sigma factor is associated with the core the holoenzyme is formed, which can initiate transcription.

It carries out the reaction RNA(n) + a ribonucleoside 5'-triphosphate = RNA(n+1) + diphosphate. Its function is as follows. DNA-dependent RNA polymerase catalyzes the transcription of DNA into RNA using the four ribonucleoside triphosphates as substrates. The chain is DNA-directed RNA polymerase subunit alpha from Pelobacter propionicus (strain DSM 2379 / NBRC 103807 / OttBd1).